A 760-amino-acid chain; its full sequence is Dipeptidyl peptidase 4 (760 aa).

At 1 to 6 (MKTPWK) the chain is on the cytoplasmic side. The chain crosses the membrane as a helical; Signal-anchor for type II membrane protein span at residues 7-28 (VLLGLLGVAALVTIITVPIVLL). The Extracellular portion of the chain corresponds to 29-760 (SKDEAAADSR…HFLQQCFSLH (732 aa)). Residues Asn-83, Asn-90, Asn-144, Asn-213, Asn-223, Asn-315, and Asn-328 are each glycosylated (N-linked (GlcNAc...) asparagine). Cystine bridges form between Cys-322–Cys-333, Cys-379–Cys-388, Cys-438–Cys-441, and Cys-448–Cys-466. Asn-514 carries N-linked (GlcNAc...) asparagine glycosylation. Ser-624 (charge relay system) is an active-site residue. A disulfide bridge links Cys-643 with Cys-756. The N-linked (GlcNAc...) asparagine glycan is linked to Asn-679. Residues Asp-702 and His-734 each act as charge relay system in the active site.

Belongs to the peptidase S9B family. DPPIV subfamily. Monomer. Homodimer. Heterodimer with Seprase (FAP). Requires homodimerization for optimal dipeptidyl peptidase activity and T-cell costimulation. Found in a membrane raft complex, at least composed of BCL10, CARD11, DPP4 and IKBKB. Associates with collagen. Interacts with PTPRC; the interaction is enhanced in an interleukin-12-dependent manner in activated lymphocytes. Interacts (via extracellular domain) with ADA; does not inhibit its dipeptidyl peptidase activity. Interacts with CAV1 (via the N-terminus); the interaction is direct. Interacts (via cytoplasmic tail) with CARD11 (via PDZ domain); its homodimerization is necessary for interaction with CARD11. Interacts with IGF2R; the interaction is direct. Interacts with GPC3. In terms of processing, the soluble form (Dipeptidyl peptidase 4 soluble form also named SDPP) derives from the membrane form (Dipeptidyl peptidase 4 membrane form also named MDPP) by proteolytic processing. Post-translationally, N- and O-Glycosylated. Phosphorylated. Mannose 6-phosphate residues in the carbohydrate moiety are necessary for interaction with IGF2R in activated T-cells. Mannose 6-phosphorylation is induced during T-cell activation.

The protein resides in the secreted. It localises to the cell membrane. Its subcellular location is the apical cell membrane. The protein localises to the cell projection. It is found in the invadopodium membrane. The protein resides in the lamellipodium membrane. It localises to the cell junction. Its subcellular location is the membrane raft. It catalyses the reaction Release of an N-terminal dipeptide, Xaa-Yaa-|-Zaa-, from a polypeptide, preferentially when Yaa is Pro, provided Zaa is neither Pro nor hydroxyproline.. Inhibited by GPC3 and diprotin A. Its function is as follows. Cell surface glycoprotein receptor involved in the costimulatory signal essential for T-cell receptor (TCR)-mediated T-cell activation. Acts as a positive regulator of T-cell coactivation, by binding at least ADA, CAV1, IGF2R, and PTPRC. Its binding to CAV1 and CARD11 induces T-cell proliferation and NF-kappa-B activation in a T-cell receptor/CD3-dependent manner. Its interaction with ADA also regulates lymphocyte-epithelial cell adhesion. In association with FAP is involved in the pericellular proteolysis of the extracellular matrix (ECM), the migration and invasion of endothelial cells into the ECM. May be involved in the promotion of lymphatic endothelial cells adhesion, migration and tube formation. When overexpressed, enhanced cell proliferation, a process inhibited by GPC3. Also acts as a serine exopeptidase with a dipeptidyl peptidase activity that regulates various physiological processes by cleaving peptides in the circulation, including many chemokines, mitogenic growth factors, neuropeptides and peptide hormones. Removes N-terminal dipeptides sequentially from polypeptides having unsubstituted N-termini provided that the penultimate residue is proline. This is Dipeptidyl peptidase 4 (Dpp4) from Mus musculus (Mouse).